The sequence spans 178 residues: Disulfide bond formation protein B (178 aa).

Over 1 to 14 (MLSFFKTLSMGRSG) the chain is Cytoplasmic. Residues 15–31 (WLLLAFSALVLELVALY) traverse the membrane as a helical segment. Residues 32 to 49 (FQYGMQLQPCVMCVYERV) lie on the Periplasmic side of the membrane. Cys-41 and Cys-44 are oxidised to a cystine. Residues 50–65 (ALGGILFAGIIGAIAP) traverse the membrane as a helical segment. The Cytoplasmic segment spans residues 66–72 (SSWFFRF). A helical membrane pass occupies residues 73-90 (LGIIIGLGASVKGFLLAL). At 91 to 145 (KHVDYQLNPAPWNQCAYLPEFPQTLPLDQWFPYLFKPIGSCSDIQWSFLGFSMAQ) the chain is on the periplasmic side. A disulfide bond links Cys-105 and Cys-131. Residues 146–164 (WILVMFAFYSILLAIILIS) traverse the membrane as a helical segment. Over 165-178 (QVKAGKPKHREIFR) the chain is Cytoplasmic.

This sequence belongs to the DsbB family.

Its subcellular location is the cell inner membrane. Its function is as follows. Required for disulfide bond formation in some periplasmic proteins. Acts by oxidizing the DsbA protein. In Mannheimia succiniciproducens (strain KCTC 0769BP / MBEL55E), this protein is Disulfide bond formation protein B.